A 483-amino-acid chain; its full sequence is UDP-N-acetylmuramate--L-alanine ligase (483 aa).

122–128 (GSHGKTT) contributes to the ATP binding site.

It belongs to the MurCDEF family.

The protein localises to the cytoplasm. It catalyses the reaction UDP-N-acetyl-alpha-D-muramate + L-alanine + ATP = UDP-N-acetyl-alpha-D-muramoyl-L-alanine + ADP + phosphate + H(+). The protein operates within cell wall biogenesis; peptidoglycan biosynthesis. Functionally, cell wall formation. This Synechococcus sp. (strain CC9311) protein is UDP-N-acetylmuramate--L-alanine ligase.